Reading from the N-terminus, the 423-residue chain is Protein TylM3 (423 aa).

Positions 1–21 (MNTAAGPTGTAAGGTTAPAAA) are enriched in low complexity. Disordered stretches follow at residues 1-26 (MNTAAGPTGTAAGGTTAPAAAHDLSR) and 117-149 (GSALDAAHGNPGGPPLPGGWPHRPPDREERDDP). A compositionally biased stretch (basic and acidic residues) spans 139 to 149 (RPPDREERDDP).

Belongs to the cytochrome P450 family.

It functions in the pathway antibiotic biosynthesis; tylosin biosynthesis. In terms of biological role, involved in the biosynthesis of the macrolide antibiotic tylosin derived from the polyketide lactone tylactone. TylM3 is required for the glycosylation of the 5-hydroxyl group of tylactone to yield 5-O-mycaminosytylactone. The sequence is that of Protein TylM3 from Streptomyces fradiae (Streptomyces roseoflavus).